The primary structure comprises 311 residues: Manganese-dependent ADP-ribose/CDP-alcohol diphosphatase (311 aa).

Asp-17, Gln-19, Asp-64, Asn-99, His-218, His-255, and His-257 together coordinate Zn(2+).

This sequence belongs to the ADPRibase-Mn family. As to quaternary structure, monomer. Requires Mg(2+) as cofactor.

It catalyses the reaction CDP-choline + H2O = phosphocholine + CMP + 2 H(+). It carries out the reaction ADP-D-ribose + H2O = D-ribose 5-phosphate + AMP + 2 H(+). The enzyme catalyses CDP-glycerol + H2O = sn-glycerol 3-phosphate + CMP + 2 H(+). Functionally, hydrolyzes ADP-ribose, IDP-ribose, CDP-glycerol, CDP-choline and CDP-ethanolamine, but not other non-reducing ADP-sugars or CDP-glucose. This chain is Manganese-dependent ADP-ribose/CDP-alcohol diphosphatase, found in Arabidopsis thaliana (Mouse-ear cress).